The chain runs to 95 residues: Putative pterin-4-alpha-carbinolamine dehydratase (95 aa).

This sequence belongs to the pterin-4-alpha-carbinolamine dehydratase family.

The catalysed reaction is (4aS,6R)-4a-hydroxy-L-erythro-5,6,7,8-tetrahydrobiopterin = (6R)-L-erythro-6,7-dihydrobiopterin + H2O. This chain is Putative pterin-4-alpha-carbinolamine dehydratase, found in Prochlorococcus marinus (strain NATL2A).